Reading from the N-terminus, the 249-residue chain is tRNA pseudouridine synthase A (249 aa).

Residue aspartate 53 is the Nucleophile of the active site. Tyrosine 111 contributes to the substrate binding site.

The protein belongs to the tRNA pseudouridine synthase TruA family. In terms of assembly, homodimer.

It catalyses the reaction uridine(38/39/40) in tRNA = pseudouridine(38/39/40) in tRNA. Formation of pseudouridine at positions 38, 39 and 40 in the anticodon stem and loop of transfer RNAs. This chain is tRNA pseudouridine synthase A, found in Streptococcus pyogenes serotype M3 (strain ATCC BAA-595 / MGAS315).